Here is a 97-residue protein sequence, read N- to C-terminus: U6-theraphotoxin-Hhn1a 3 (97 aa).

Positions 1–33 are cleaved as a signal peptide; that stretch reads MLIKQFSRRSKNTKVQILLAFAALFVLAVGSYA. A propeptide spanning residues 34–61 is cleaved from the precursor; it reads SESKKLDLRDALFSAMFSADYQLNPQER. Intrachain disulfides connect Cys-63-Cys-77, Cys-70-Cys-82, and Cys-76-Cys-89.

Belongs to the neurotoxin 10 (Hwtx-1) family. 12 (Hntx-12) subfamily. As to expression, expressed by the venom gland.

It localises to the secreted. In terms of biological role, ion channel inhibitor. In Cyriopagopus hainanus (Chinese bird spider), this protein is U6-theraphotoxin-Hhn1a 3.